The sequence spans 369 residues: Uroporphyrinogen decarboxylase (369 aa).

Residues 28-32, Asp-78, Tyr-154, Ser-209, and His-339 each bind substrate; that span reads RQAGR.

Belongs to the uroporphyrinogen decarboxylase family. As to quaternary structure, homodimer.

It is found in the cytoplasm. It carries out the reaction uroporphyrinogen III + 4 H(+) = coproporphyrinogen III + 4 CO2. Its pathway is porphyrin-containing compound metabolism; protoporphyrin-IX biosynthesis; coproporphyrinogen-III from 5-aminolevulinate: step 4/4. Functionally, catalyzes the decarboxylation of four acetate groups of uroporphyrinogen-III to yield coproporphyrinogen-III. The polypeptide is Uroporphyrinogen decarboxylase (Polaromonas naphthalenivorans (strain CJ2)).